Consider the following 218-residue polypeptide: Octanoyltransferase (218 aa).

Positions 31-206 (EETPDEVWLV…ELVNLLGYEQ (176 aa)) constitute a BPL/LPL catalytic domain. Substrate is bound by residues 70–77 (RGGQVTYH), 137–139 (SLG), and 150–152 (GLA). The active-site Acyl-thioester intermediate is Cys-168.

It belongs to the LipB family.

Its subcellular location is the cytoplasm. The catalysed reaction is octanoyl-[ACP] + L-lysyl-[protein] = N(6)-octanoyl-L-lysyl-[protein] + holo-[ACP] + H(+). It functions in the pathway protein modification; protein lipoylation via endogenous pathway; protein N(6)-(lipoyl)lysine from octanoyl-[acyl-carrier-protein]: step 1/2. Its function is as follows. Catalyzes the transfer of endogenously produced octanoic acid from octanoyl-acyl-carrier-protein onto the lipoyl domains of lipoate-dependent enzymes. Lipoyl-ACP can also act as a substrate although octanoyl-ACP is likely to be the physiological substrate. This chain is Octanoyltransferase, found in Vibrio vulnificus (strain YJ016).